Here is a 427-residue protein sequence, read N- to C-terminus: Tyrosine--tRNA ligase (427 aa).

Residue Y33 coordinates L-tyrosine. Residues P38–N47 carry the 'HIGH' region motif. L-tyrosine is bound by residues Y168 and Q172. The 'KMSKS' region signature appears at K228–S232. An ATP-binding site is contributed by K231. Residues L361 to N427 form the S4 RNA-binding domain.

It belongs to the class-I aminoacyl-tRNA synthetase family. TyrS type 1 subfamily. In terms of assembly, homodimer.

Its subcellular location is the cytoplasm. It carries out the reaction tRNA(Tyr) + L-tyrosine + ATP = L-tyrosyl-tRNA(Tyr) + AMP + diphosphate + H(+). Functionally, catalyzes the attachment of tyrosine to tRNA(Tyr) in a two-step reaction: tyrosine is first activated by ATP to form Tyr-AMP and then transferred to the acceptor end of tRNA(Tyr). The chain is Tyrosine--tRNA ligase from Cytophaga hutchinsonii (strain ATCC 33406 / DSM 1761 / CIP 103989 / NBRC 15051 / NCIMB 9469 / D465).